Reading from the N-terminus, the 148-residue chain is Aspartate carbamoyltransferase regulatory chain (148 aa).

C106, C111, C134, and C137 together coordinate Zn(2+).

Belongs to the PyrI family. Contains catalytic and regulatory chains. Zn(2+) is required as a cofactor.

Involved in allosteric regulation of aspartate carbamoyltransferase. The polypeptide is Aspartate carbamoyltransferase regulatory chain (Methanococcus maripaludis (strain C5 / ATCC BAA-1333)).